Reading from the N-terminus, the 198-residue chain is Imidazoleglycerol-phosphate dehydratase (198 aa).

Belongs to the imidazoleglycerol-phosphate dehydratase family.

It is found in the cytoplasm. It catalyses the reaction D-erythro-1-(imidazol-4-yl)glycerol 3-phosphate = 3-(imidazol-4-yl)-2-oxopropyl phosphate + H2O. The protein operates within amino-acid biosynthesis; L-histidine biosynthesis; L-histidine from 5-phospho-alpha-D-ribose 1-diphosphate: step 6/9. This chain is Imidazoleglycerol-phosphate dehydratase, found in Agrobacterium fabrum (strain C58 / ATCC 33970) (Agrobacterium tumefaciens (strain C58)).